The chain runs to 92 residues: Dynein light chain 1, cytoplasmic (92 aa).

This sequence belongs to the dynein light chain family. In terms of assembly, homodimer. Cytoplasmic dynein consists of two catalytic heavy chains (HCs) and a number of non-catalytic subunits which present intermediate chains (ICs), light intermediate chains (LICs) and light chains (LCs). Component of the nuclear pore complex (NPC). NPC constitutes the exclusive means of nucleocytoplasmic transport. NPCs allow the passive diffusion of ions and small molecules and the active, nuclear transport receptor-mediated bidirectional transport of macromolecules such as proteins, RNAs, ribonucleoparticles (RNPs), and ribosomal subunits across the nuclear envelope. Due to its 8-fold rotational symmetry, all subunits are present with 8 copies or multiples thereof. Part of the NUP82 subcomplex. In the complex, interacts directly with Nup159.

The protein resides in the cytoplasm. It localises to the cytoskeleton. The protein localises to the nucleus. Its subcellular location is the nuclear pore complex. Acts as one of several non-catalytic accessory components of the cytoplasmic dynein complex that are thought to be involved in linking dynein to cargos and to adapter proteins that regulate dynein function. Cytoplasmic dynein 1 acts as a motor for the intracellular retrograde motility of vesicles and organelles along microtubules. May play a role in changing or maintaining the spatial distribution of cytoskeletal structures. Also a component of the nuclear pore complex where it may contribute to the stable association of the Nup82 subcomplex with the NPC. The protein is Dynein light chain 1, cytoplasmic (DYN2) of Saccharomyces cerevisiae (strain ATCC 204508 / S288c) (Baker's yeast).